We begin with the raw amino-acid sequence, 782 residues long: Ribosome biogenesis protein ERB1 (782 aa).

Disordered stretches follow at residues 1 to 123 (MGSK…RIEK) and 339 to 361 (PEEY…EDRE). Residues 35-86 (SEDEEDYLPSDDDDDVEDSENEGTGASEDDDDDDDDDDILSDDIPSDVDSEE) are compositionally biased toward acidic residues. Residues 105-123 (VDPKREEDDGADRNYRIEK) show a composition bias toward basic and acidic residues. 7 WD repeats span residues 433-472 (GHEG…QVWS), 476-516 (NSEE…VTPA), 567-609 (TVRS…TQIP), 612-650 (KLSG…LVKV), 653-692 (PGAK…RPYK), 696-736 (FHGQ…DQLE), and 752-782 (VSKL…RLWM).

This sequence belongs to the WD repeat BOP1/ERB1 family. Component of the NOP7 complex, composed of ERB1, NOP7 and YTM1. The complex is held together by ERB1, which interacts with NOP7 via its N-terminal domain and with YTM1 via a high-affinity interaction between the seven-bladed beta-propeller domains of the 2 proteins. The NOP7 complex associates with the 66S pre-ribosome.

It is found in the nucleus. The protein localises to the nucleolus. The protein resides in the nucleoplasm. Its function is as follows. Component of the NOP7 complex, which is required for maturation of the 25S and 5.8S ribosomal RNAs and formation of the 60S ribosome. This chain is Ribosome biogenesis protein ERB1, found in Chaetomium globosum (strain ATCC 6205 / CBS 148.51 / DSM 1962 / NBRC 6347 / NRRL 1970) (Soil fungus).